The chain runs to 221 residues: MGQKIHPLGFRLGITQQHRSTWFAPRKLYVSWIHEERQLRDYLKTRLADAGVANVQLTRQSDRIEVEIHTACPGAIVGRTGQGLEILREDIQKRLPKVRRVIVHVVEIANPDAQAVLIGGIIAKQLEERIPFRRAVRQAVQRAMRAPGVEGIKIEVSGRLNGAEIARSEWVREGRVPLHTLRADVDYCDCTAQTIYGVLGIKVWIFRGEIRPVRQVLAPGT.

Residues Leu39–Ala109 enclose the KH type-2 domain.

Belongs to the universal ribosomal protein uS3 family. Part of the 30S ribosomal subunit.

Its subcellular location is the plastid. It is found in the chloroplast. The protein is Small ribosomal subunit protein uS3c (rps3) of Nephroselmis olivacea (Green alga).